Consider the following 358-residue polypeptide: Peptide chain release factor 1 (358 aa).

At Gln237 the chain carries N5-methylglutamine.

It belongs to the prokaryotic/mitochondrial release factor family. In terms of processing, methylated by PrmC. Methylation increases the termination efficiency of RF1.

The protein localises to the cytoplasm. In terms of biological role, peptide chain release factor 1 directs the termination of translation in response to the peptide chain termination codons UAG and UAA. The protein is Peptide chain release factor 1 of Streptomyces griseus subsp. griseus (strain JCM 4626 / CBS 651.72 / NBRC 13350 / KCC S-0626 / ISP 5235).